The sequence spans 1012 residues: 5'-3' exoribonuclease 2 (1012 aa).

Residues 264-281 (GKCFLCGQEGHRAADCEG) form a CCHC-type zinc finger. Disordered stretches follow at residues 411-439 (VQQR…AQAS), 888-976 (TFKD…QRQV), and 990-1012 (QRKK…PKTA). Basic and acidic residues predominate over residues 415 to 433 (QSERFRRDKARDKARDNAR). A compositionally biased stretch (polar residues) spans 904 to 914 (ITPKKMNSPQR). Composition is skewed to basic and acidic residues over residues 918-928 (WKKDETPQSRE) and 950-962 (PQRE…KKEN). Residues 990–1002 (QRKKEKYLRKKAK) are compositionally biased toward basic residues.

This sequence belongs to the 5'-3' exonuclease family. XRN2/RAT1 subfamily. In terms of tissue distribution, expressed in roots, leaves, stems and flowers.

It is found in the nucleus. In terms of biological role, possesses 5'-&gt;3' exoribonuclease activity. Acts as an endogenous post-transcriptional gene silencing (PTGS) suppressor. Degrades miRNA-derived loops, excised during miRNA maturation in the nucleus. Involved in pre-rRNA processing. Involved in the primary exonucleolytic shortening of the 5' external transcribed spacer (5'ETS), required for endonucleolytic processing at site P by the U3 snoRNP complex. Involved with XRN3 in the 5'-end processing of 5.8S and 25S rRNAs. Contributes with XRN3 to polyadenylation-dependent nuclear RNA surveillance. Involved in the degradation of aberrant polyadenylated pre-rRNA through 5'-end processing. This chain is 5'-3' exoribonuclease 2, found in Arabidopsis thaliana (Mouse-ear cress).